A 340-amino-acid polypeptide reads, in one-letter code: Phenylalanine--tRNA ligase alpha subunit (340 aa).

Mg(2+) is bound at residue E255.

It belongs to the class-II aminoacyl-tRNA synthetase family. Phe-tRNA synthetase alpha subunit type 1 subfamily. In terms of assembly, tetramer of two alpha and two beta subunits. Mg(2+) is required as a cofactor.

The protein localises to the cytoplasm. The catalysed reaction is tRNA(Phe) + L-phenylalanine + ATP = L-phenylalanyl-tRNA(Phe) + AMP + diphosphate + H(+). This is Phenylalanine--tRNA ligase alpha subunit from Desulfitobacterium hafniense (strain DSM 10664 / DCB-2).